Consider the following 108-residue polypeptide: uncharacterized protein (108 aa).

The N-terminal stretch at 1–21 (MFRSLFLAAALMAFTPLAANA) is a signal peptide.

It to E.coli YaaX.

This is an uncharacterized protein from Escherichia coli O157:H7.